The chain runs to 383 residues: BRISC and BRCA1-A complex member 2 (383 aa).

Met-1 is subject to N-acetylmethionine. Ser-2 is subject to Phosphoserine. UEV-like regions lie at residues 30 to 147 (DATN…TLLE) and 275 to 364 (IAAF…RAKA).

Belongs to the BABAM2 family. As to quaternary structure, component of the ARISC complex, at least composed of UIMC1/RAP80, ABRAXAS1, BRCC3/BRCC36, BABAM2 and BABAM1/NBA1. Component of the BRCA1-A complex, at least composed of BRCA1, BARD1, UIMC1/RAP80, ABRAXAS1, BRCC3/BRCC36, BABAM2 and BABAM1/NBA1. In the BRCA1-A complex, interacts directly with ABRAXAS1, BRCC3/BRCC36 and BABAM1/NBA1. Binds polyubiquitin. Component of the BRISC complex, at least composed of ABRAXAS2, BRCC3/BRCC36, BABAM2 and BABAM1/NBA1. Identified in a complex with SHMT2 and the other subunits of the BRISC complex. Component of the BRCA1/BRCA2 containing complex (BRCC), which also contains BRCA1, BRCA2, BARD1, BRCC3/BRCC36 and RAD51. BRCC is a ubiquitin E3 ligase complex that enhances cellular survival following DNA damage. May interact with FAS and TNFRSF1A.

It localises to the cytoplasm. The protein localises to the nucleus. Its function is as follows. Component of the BRCA1-A complex, a complex that specifically recognizes 'Lys-63'-linked ubiquitinated histones H2A and H2AX at DNA lesions sites, leading to target the BRCA1-BARD1 heterodimer to sites of DNA damage at double-strand breaks (DSBs). The BRCA1-A complex also possesses deubiquitinase activity that specifically removes 'Lys-63'-linked ubiquitin on histones H2A and H2AX. In the BRCA1-A complex, it acts as an adapter that bridges the interaction between BABAM1/NBA1 and the rest of the complex, thereby being required for the complex integrity and modulating the E3 ubiquitin ligase activity of the BRCA1-BARD1 heterodimer. Component of the BRISC complex, a multiprotein complex that specifically cleaves 'Lys-63'-linked ubiquitin in various substrates. Within the BRISC complex, acts as an adapter that bridges the interaction between BABAM1/NBA1 and the rest of the complex, thereby being required for the complex integrity. The BRISC complex is required for normal mitotic spindle assembly and microtubule attachment to kinetochores via its role in deubiquitinating NUMA1. The BRISC complex plays a role in interferon signaling via its role in the deubiquitination of the interferon receptor IFNAR1; deubiquitination increases IFNAR1 activity by enhancing its stability and cell surface expression. Down-regulates the response to bacterial lipopolysaccharide (LPS) via its role in IFNAR1 deubiquitination. May play a role in homeostasis or cellular differentiation in cells of neural, epithelial and germline origins. May also act as a death receptor-associated anti-apoptotic protein, which inhibits the mitochondrial apoptotic pathway. May regulate TNF-alpha signaling through its interactions with TNFRSF1A; however these effects may be indirect. The sequence is that of BRISC and BRCA1-A complex member 2 from Rattus norvegicus (Rat).